We begin with the raw amino-acid sequence, 102 residues long: Transcription factor UPBEAT1 (102 aa).

The region spanning 32-82 (IRPRKSVEASRRPCRAIHRRVKTLKELVPNTKTSEGLDGLFRQTADYILAL) is the bHLH domain.

Homodimer. Expressed in the root vascular tissue and in root hairs and lateral root caps. Detected at the protein level in all cell files in the elongation zone.

It localises to the nucleus. Transcription factor that modulates the balance between cellular proliferation and differentiation in root growth. Does not act through cytokinin and auxin signaling, but by repressing peroxidase expression in the elongation zone. This Arabidopsis thaliana (Mouse-ear cress) protein is Transcription factor UPBEAT1 (UPB1).